The primary structure comprises 340 residues: Putative transport protein AF_1800 (340 aa).

7 consecutive transmembrane segments (helical) span residues 7 to 27 (LVLLLSILVVLALTFYFFTPL), 57 to 77 (SVIATAIVILPISVLMFYGLI), 140 to 160 (TLLILNFFISIVVCFYALADM), 193 to 213 (LWFGNFVVAILIGLVSLPFFL), 225 to 245 (GLMFLAALIPIFAEWMIILPV), 260 to 280 (FLLIGVVFLYVLPELILRPYF), and 290 to 310 (LVLMLAFIGGGLVGGISGFFI).

It belongs to the autoinducer-2 exporter (AI-2E) (TC 2.A.86) family.

Its subcellular location is the cell membrane. The chain is Putative transport protein AF_1800 from Archaeoglobus fulgidus (strain ATCC 49558 / DSM 4304 / JCM 9628 / NBRC 100126 / VC-16).